A 327-amino-acid polypeptide reads, in one-letter code: Malate dehydrogenase (327 aa).

Residue 11-17 (GAAGQIG) coordinates NAD(+). 2 residues coordinate substrate: arginine 92 and arginine 98. Residues asparagine 105, glutamine 112, and 129–131 (VGN) contribute to the NAD(+) site. 2 residues coordinate substrate: asparagine 131 and arginine 162. Catalysis depends on histidine 187, which acts as the Proton acceptor.

Belongs to the LDH/MDH superfamily. MDH type 2 family.

It carries out the reaction (S)-malate + NAD(+) = oxaloacetate + NADH + H(+). Functionally, catalyzes the reversible oxidation of malate to oxaloacetate. The chain is Malate dehydrogenase from Thermus thermophilus (strain ATCC BAA-163 / DSM 7039 / HB27).